The following is a 97-amino-acid chain: MAQLLSDIEINSQIGQLPDWSVVGQEIQMVRKFKDFIAAIDFVNKLVEPAEAAGHHPDIAISYNKVTITLTTHDAGGLTQKDFDLAQVISQLSRIWV.

This sequence belongs to the pterin-4-alpha-carbinolamine dehydratase family.

It carries out the reaction (4aS,6R)-4a-hydroxy-L-erythro-5,6,7,8-tetrahydrobiopterin = (6R)-L-erythro-6,7-dihydrobiopterin + H2O. The polypeptide is Putative pterin-4-alpha-carbinolamine dehydratase (Cyanothece sp. (strain PCC 7425 / ATCC 29141)).